The sequence spans 217 residues: Large ribosomal subunit protein uL1 (217 aa).

Belongs to the universal ribosomal protein uL1 family. Part of the 50S ribosomal subunit.

Binds directly to 23S rRNA. Probably involved in E site tRNA release. Functionally, protein L1 is also a translational repressor protein, it controls the translation of its operon by binding to its mRNA. This is Large ribosomal subunit protein uL1 from Aeropyrum pernix (strain ATCC 700893 / DSM 11879 / JCM 9820 / NBRC 100138 / K1).